A 345-amino-acid polypeptide reads, in one-letter code: Phosphoribosylformylglycinamidine cyclo-ligase (345 aa).

Belongs to the AIR synthase family.

Its subcellular location is the cytoplasm. The catalysed reaction is 2-formamido-N(1)-(5-O-phospho-beta-D-ribosyl)acetamidine + ATP = 5-amino-1-(5-phospho-beta-D-ribosyl)imidazole + ADP + phosphate + H(+). Its pathway is purine metabolism; IMP biosynthesis via de novo pathway; 5-amino-1-(5-phospho-D-ribosyl)imidazole from N(2)-formyl-N(1)-(5-phospho-D-ribosyl)glycinamide: step 2/2. In Sodalis glossinidius (strain morsitans), this protein is Phosphoribosylformylglycinamidine cyclo-ligase.